The primary structure comprises 29 residues: Cycloviolacin-O21 (29 aa).

A cross-link (cyclopeptide (Gly-Asn)) is located at residues 1-29 (GLPVCGETCVTGSCYTPGCTCSWPVCTRN). Cystine bridges form between Cys-5–Cys-19, Cys-9–Cys-21, and Cys-14–Cys-26.

This is a cyclic peptide. As to expression, expressed in leaves, petals, petioles, and runners but not in roots (at protein level).

Its function is as follows. Probably participates in a plant defense mechanism. In Viola odorata (Sweet violet), this protein is Cycloviolacin-O21.